Here is a 136-residue protein sequence, read N- to C-terminus: Secreted RxLR effector protein 10 (136 aa).

Residues 1 to 22 (MRVLNFVLTTTVVLLTSSEGIA) form the signal peptide. The RxLR-dEER motif lies at 42–56 (RSLRATENPGSDESR). The tract at residues 42-78 (RSLRATENPGSDESRLNEKDTGFDPDGSSSKEDEDIG) is disordered. Residues 53–63 (DESRLNEKDTG) show a composition bias toward basic and acidic residues.

It belongs to the RxLR effector family.

The protein localises to the secreted. It localises to the host cytoplasm. Its subcellular location is the host nucleus. Functionally, effector that acts as a broad suppressor of cell death to interrupt plant immunity. Inhibits cell death induced by cell death-inducing proteins, including the PAMP elicitor INF1 from P.infestans. In Plasmopara viticola (Downy mildew of grapevine), this protein is Secreted RxLR effector protein 10.